The following is a 175-amino-acid chain: Adenine phosphoribosyltransferase (175 aa).

The protein belongs to the purine/pyrimidine phosphoribosyltransferase family. In terms of assembly, homodimer.

The protein resides in the cytoplasm. It carries out the reaction AMP + diphosphate = 5-phospho-alpha-D-ribose 1-diphosphate + adenine. It participates in purine metabolism; AMP biosynthesis via salvage pathway; AMP from adenine: step 1/1. Its function is as follows. Catalyzes a salvage reaction resulting in the formation of AMP, that is energically less costly than de novo synthesis. The sequence is that of Adenine phosphoribosyltransferase from Francisella tularensis subsp. tularensis (strain FSC 198).